We begin with the raw amino-acid sequence, 146 residues long: Hemoglobin subunit beta (146 aa).

Val1 carries the N-acetylvaline modification. A Globin domain is found at His2–His146. A heme b-binding site is contributed by His63. The residue at position 82 (Lys82) is an N6-acetyllysine. His92 contacts heme b. At Cys93 the chain carries S-nitrosocysteine. Residue Lys144 is modified to N6-acetyllysine.

This sequence belongs to the globin family. In terms of assembly, heterotetramer of two alpha chains and two beta chains. Red blood cells.

Its function is as follows. Involved in oxygen transport from the lung to the various peripheral tissues. This chain is Hemoglobin subunit beta (HBB), found in Cavia porcellus (Guinea pig).